The sequence spans 339 residues: Dihydroorotate dehydrogenase (quinone) (339 aa).

FMN-binding positions include 62 to 66 and Thr86; that span reads AGMDK. Lys66 serves as a coordination point for substrate. 111–115 is a substrate binding site; that stretch reads NRMGF. FMN is bound by residues Asn139 and Asn172. Asn172 serves as a coordination point for substrate. Ser175 acts as the Nucleophile in catalysis. Asn177 is a substrate binding site. FMN contacts are provided by Lys217 and Thr245. 246–247 contributes to the substrate binding site; that stretch reads NT. FMN is bound by residues Gly268, Gly297, and 318–319; that span reads YS.

This sequence belongs to the dihydroorotate dehydrogenase family. Type 2 subfamily. In terms of assembly, monomer. It depends on FMN as a cofactor.

The protein resides in the cell membrane. It catalyses the reaction (S)-dihydroorotate + a quinone = orotate + a quinol. Its pathway is pyrimidine metabolism; UMP biosynthesis via de novo pathway; orotate from (S)-dihydroorotate (quinone route): step 1/1. In terms of biological role, catalyzes the conversion of dihydroorotate to orotate with quinone as electron acceptor. This is Dihydroorotate dehydrogenase (quinone) from Shewanella oneidensis (strain ATCC 700550 / JCM 31522 / CIP 106686 / LMG 19005 / NCIMB 14063 / MR-1).